Consider the following 117-residue polypeptide: Large ribosomal subunit protein bL20c (117 aa).

This sequence belongs to the bacterial ribosomal protein bL20 family.

It is found in the plastid. The protein localises to the chloroplast. Functionally, binds directly to 23S ribosomal RNA and is necessary for the in vitro assembly process of the 50S ribosomal subunit. It is not involved in the protein synthesizing functions of that subunit. The chain is Large ribosomal subunit protein bL20c from Buxus microphylla (Littleleaf boxwood).